A 347-amino-acid chain; its full sequence is D-fructose 1,6-bisphosphatase class 2/sedoheptulose 1,7-bisphosphatase (347 aa).

4 residues coordinate Mn(2+): D33, E57, D97, and E100. Substrate-binding positions include 100–102, Y131, 176–178, and 198–200; these read EGT, RDR, and DGD. Position 225 (E225) interacts with Mn(2+).

Belongs to the FBPase class 2 family. In terms of assembly, homotetramer. Mn(2+) is required as a cofactor.

The catalysed reaction is beta-D-fructose 1,6-bisphosphate + H2O = beta-D-fructose 6-phosphate + phosphate. It carries out the reaction D-sedoheptulose 1,7-bisphosphate + H2O = D-sedoheptulose 7-phosphate + phosphate. It functions in the pathway carbohydrate biosynthesis; Calvin cycle. Its function is as follows. Catalyzes the hydrolysis of fructose 1,6-bisphosphate (Fru 1,6-P2) and sedoheptulose 1,7-bisphosphate (Sed 1,7-P2) to fructose 6-phosphate and sedoheptulose 7-phosphate, respectively. The chain is D-fructose 1,6-bisphosphatase class 2/sedoheptulose 1,7-bisphosphatase from Thermosynechococcus vestitus (strain NIES-2133 / IAM M-273 / BP-1).